Reading from the N-terminus, the 185-residue chain is Large ribosomal subunit protein uL16m (185 aa).

Belongs to the universal ribosomal protein uL16 family.

It is found in the mitochondrion. The chain is Large ribosomal subunit protein uL16m (RPL16) from Zea mays (Maize).